Reading from the N-terminus, the 396-residue chain is Elongation factor Tu 2 (396 aa).

The tr-type G domain maps to 10–206 (KPHINVGTIG…VLDSYIPEPQ (197 aa)). The G1 stretch occupies residues 19-26 (GHVDHGKT). GTP is bound at residue 19-26 (GHVDHGKT). T26 lines the Mg(2+) pocket. A G2 region spans residues 60 to 64 (GITIN). The tract at residues 81 to 84 (DCPG) is G3. GTP contacts are provided by residues 81–85 (DCPGH) and 136–139 (NKAD). The interval 136–139 (NKAD) is G4. A G5 region spans residues 174–176 (SAL).

Belongs to the TRAFAC class translation factor GTPase superfamily. Classic translation factor GTPase family. EF-Tu/EF-1A subfamily. As to quaternary structure, monomer.

Its subcellular location is the cytoplasm. It catalyses the reaction GTP + H2O = GDP + phosphate + H(+). In terms of biological role, GTP hydrolase that promotes the GTP-dependent binding of aminoacyl-tRNA to the A-site of ribosomes during protein biosynthesis. The protein is Elongation factor Tu 2 of Nitrosomonas eutropha (strain DSM 101675 / C91 / Nm57).